The primary structure comprises 310 residues: Leucine carboxyl methyltransferase 1 (310 aa).

S-adenosyl-L-methionine-binding positions include Arg50, Gly75, Asp100, 145 to 146 (DI), and Glu169.

This sequence belongs to the methyltransferase superfamily. LCMT family.

It carries out the reaction [phosphatase 2A protein]-C-terminal L-leucine + S-adenosyl-L-methionine = [phosphatase 2A protein]-C-terminal L-leucine methyl ester + S-adenosyl-L-homocysteine. Functionally, methylates the carboxyl group of the C-terminal leucine residue of protein phosphatase 2A catalytic subunits to form alpha-leucine ester residues. This Schizosaccharomyces pombe (strain 972 / ATCC 24843) (Fission yeast) protein is Leucine carboxyl methyltransferase 1 (ppm1).